Consider the following 703-residue polypeptide: Calpain-8 (703 aa).

Residues 45–344 (LFKDPEFPAC…FSRLEICNLS (300 aa)) enclose the Calpain catalytic domain. Residues C105, H262, and N286 contribute to the active site. Positions 356-379 (WNLVLFNGHWTRGSTAGGCQNYPA) are domain III. EF-hand domains lie at 575–610 (FNINTCREMISLLDSNGTGTLGAVEFKTLWLKIQKY), 618–640 (DYNHSGTIDAHEMRTALRKAGFT), and 670–703 (IRLETLFKLFSLLDEDKDGMVQLSLAEWLCCVLV). D588, N590, T592, T594, E599, D618, N620, S622, T624, and E629 together coordinate Ca(2+).

The protein belongs to the peptidase C2 family. As to quaternary structure, monomer and homooligomer. Interacts with COPS1/GPS1, COPB1, EYA2, NME2, NME4 and TOMM70. The cofactor is Ca(2+). Post-translationally, undergoes autolytic cleavage between Ala-5 and Ala-6 which gives rise to fragments extending from Ala-6 to the C-terminus, Ala-6 to the EF-hand 2 domain and from Ala-6 to the beginning of domain III. Stomach.

The protein localises to the cytoplasm. It is found in the golgi apparatus. The enzyme catalyses Broad endopeptidase specificity.. In terms of biological role, calcium-regulated non-lysosomal thiol-protease. Involved in membrane trafficking in the gastric surface mucus cells (pit cells) and may involve the membrane trafficking of mucus cells via interactions with coat protein. Proteolytically cleaves the beta-subunit of coatomer complex. The polypeptide is Calpain-8 (CAPN8) (Homo sapiens (Human)).